The following is a 181-amino-acid chain: Large ribosomal subunit protein uL5 (181 aa).

The protein belongs to the universal ribosomal protein uL5 family. Part of the 50S ribosomal subunit; part of the 5S rRNA/L5/L18/L25 subcomplex. Contacts the 5S rRNA and the P site tRNA. Forms a bridge to the 30S subunit in the 70S ribosome.

This is one of the proteins that bind and probably mediate the attachment of the 5S RNA into the large ribosomal subunit, where it forms part of the central protuberance. In the 70S ribosome it contacts protein S13 of the 30S subunit (bridge B1b), connecting the 2 subunits; this bridge is implicated in subunit movement. Contacts the P site tRNA; the 5S rRNA and some of its associated proteins might help stabilize positioning of ribosome-bound tRNAs. This Sulfurovum sp. (strain NBC37-1) protein is Large ribosomal subunit protein uL5.